A 446-amino-acid chain; its full sequence is T-box transcription factor TBX20 (446 aa).

Positions 50-80 (SCHPNLGDLPPLETHSDFSSGGGTGSGAPLC) are disordered. Positions 108–287 (LWDKFHELGT…SNPFAKGFRD (180 aa)) form a DNA-binding region, T-box.

The protein resides in the nucleus. In terms of biological role, transcriptional regulator that may play a very early role in the differentiation of the cardiac precursors. This is T-box transcription factor TBX20 (tbx20) from Danio rerio (Zebrafish).